The following is a 384-amino-acid chain: Flap endonuclease 1 (384 aa).

Positions 1 to 105 (MGVKGLNQLI…GELEKRLLKR (105 aa)) are N-domain. Aspartate 34 serves as a coordination point for Mg(2+). Residues arginine 47 and arginine 71 each contribute to the DNA site. The Mg(2+) site is built by aspartate 87, glutamate 159, glutamate 161, aspartate 180, and aspartate 182. An I-domain region spans residues 123–254 (DMTKYQKRLV…VTAYKLIKEH (132 aa)). Position 159 (glutamate 159) interacts with DNA. Residues glycine 232 and aspartate 234 each coordinate DNA. Residue aspartate 234 participates in Mg(2+) binding. Positions 341–349 (IQGRLDGFF) are interaction with PCNA. The segment at 354-384 (KYSNTSPLGKDDKKRKTNDKKGAAAKKTKRR) is disordered. Positions 362 to 375 (GKDDKKRKTNDKKG) are enriched in basic and acidic residues.

Belongs to the XPG/RAD2 endonuclease family. FEN1 subfamily. As to quaternary structure, interacts with PCNA. Three molecules of FEN1 bind to one PCNA trimer with each molecule binding to one PCNA monomer. PCNA stimulates the nuclease activity without altering cleavage specificity. Requires Mg(2+) as cofactor. Phosphorylated. Phosphorylation upon DNA damage induces relocalization to the nuclear plasma.

It localises to the nucleus. The protein localises to the nucleolus. The protein resides in the nucleoplasm. It is found in the mitochondrion. Structure-specific nuclease with 5'-flap endonuclease and 5'-3' exonuclease activities involved in DNA replication and repair. During DNA replication, cleaves the 5'-overhanging flap structure that is generated by displacement synthesis when DNA polymerase encounters the 5'-end of a downstream Okazaki fragment. It enters the flap from the 5'-end and then tracks to cleave the flap base, leaving a nick for ligation. Also involved in the long patch base excision repair (LP-BER) pathway, by cleaving within the apurinic/apyrimidinic (AP) site-terminated flap. Acts as a genome stabilization factor that prevents flaps from equilibrating into structures that lead to duplications and deletions. Also possesses 5'-3' exonuclease activity on nicked or gapped double-stranded DNA, and exhibits RNase H activity. Also involved in replication and repair of rDNA and in repairing mitochondrial DNA. The protein is Flap endonuclease 1 of Lodderomyces elongisporus (strain ATCC 11503 / CBS 2605 / JCM 1781 / NBRC 1676 / NRRL YB-4239) (Yeast).